Reading from the N-terminus, the 285-residue chain is Zinc transporter ZupT (285 aa).

Transmembrane regions (helical) follow at residues A13–F33, F41–M61, and W80–V100. Fe(2+) contacts are provided by N153 and E156. E156 serves as a coordination point for Zn(2+). The chain crosses the membrane as a helical span at residues T160–I180. H181 contributes to the Zn(2+) binding site. N182, E185, and E214 together coordinate Fe(2+). E185 is a Zn(2+) binding site. Helical transmembrane passes span F204 to L224, I228 to I248, and L265 to I285.

The protein belongs to the ZIP transporter (TC 2.A.5) family. ZupT subfamily.

The protein resides in the cell membrane. The catalysed reaction is Zn(2+)(in) = Zn(2+)(out). Its function is as follows. Mediates zinc uptake. May also transport other divalent cations. This Clostridium perfringens (strain 13 / Type A) protein is Zinc transporter ZupT.